The sequence spans 1429 residues: uncharacterized protein (1429 aa).

Disordered stretches follow at residues 1–76 (MEGE…SGIE) and 103–130 (PAGA…AGEK). Over residues 14–29 (SHSTSVVSERASSSGV) the composition is skewed to low complexity. Polar residues predominate over residues 109 to 121 (SAQNANLISSKSE). 2 helical membrane passes run 197–217 (LTGQ…LSWI) and 225–245 (FFIL…CMIS). Positions 266-471 (DYETMSWFNT…WPNMFDYDLS (206 aa)) constitute an SMP-LTD domain. C2 domains lie at 462-584 (WPNM…GDIY) and 738-858 (TPVD…DRSA). The disordered stretch occupies residues 899–932 (NTDNSSKQSSENVQSATDPTTPAKDNSTSNAETS). Positions 1060 to 1177 (TYMPVPMTLN…EPNVESQQSI (118 aa)) constitute a C2 3 domain. Residues 1280–1303 (EKNPSRSDLTTTQEASSSASVPPA) are disordered. Over residues 1294–1303 (ASSSASVPPA) the composition is skewed to low complexity.

It is found in the membrane. This is an uncharacterized protein from Schizosaccharomyces pombe (strain 972 / ATCC 24843) (Fission yeast).